The sequence spans 128 residues: Large ribosomal subunit protein bL19 (128 aa).

It belongs to the bacterial ribosomal protein bL19 family.

Functionally, this protein is located at the 30S-50S ribosomal subunit interface and may play a role in the structure and function of the aminoacyl-tRNA binding site. This chain is Large ribosomal subunit protein bL19, found in Mesoplasma florum (strain ATCC 33453 / NBRC 100688 / NCTC 11704 / L1) (Acholeplasma florum).